The following is a 108-amino-acid chain: Competence protein ComGC (108 aa).

The N-terminal stretch at 1–13 (MKKMMTFLKKAKV) is a signal peptide. The tract at residues 14-39 (KAFTLVEMLVVLLIISVLFLLFVPNL) is may be involved in polymerization of ComGC. N-methylphenylalanine is present on Phe-16. Residues 16 to 36 (FTLVEMLVVLLIISVLFLLFV) form a helical membrane-spanning segment.

The protein belongs to the ComGC family. The transformation pili are flexible filaments, consisting mainly of the major pilin ComGC and smaller amounts of the minor pilins, including at least ComGD, ComGF and ComGG, and perhaps ComGE. Homodimer. Forms higher-order multimers. Interacts with ComGG; the interaction is probably direct. Post-translationally, undergoes proteolytic cleavage.

It is found in the cell membrane. Its subcellular location is the cell surface. It localises to the fimbrium. The protein localises to the secreted. Its function is as follows. Major component of the type IV-like pilus (T4P) that plays a role in transformation. Transformation pili are dynamically extended and retracted, perhaps thereby promoting DNA uptake and transformation. Required for transformation. Required for DNA binding. The protein is Competence protein ComGC of Streptococcus pneumoniae serotype 4 (strain ATCC BAA-334 / TIGR4).